The primary structure comprises 93 residues: Small integral membrane protein 36 (93 aa).

Residues 14–34 (LIILVASYVILLLVFLVSCVL) traverse the membrane as a helical segment. The disordered stretch occupies residues 70–93 (SHWARGPSLHLKDPAPLGKKSTVV).

It is found in the membrane. The polypeptide is Small integral membrane protein 36 (Mus musculus (Mouse)).